We begin with the raw amino-acid sequence, 153 residues long: Transcriptional repressor NrdR (153 aa).

A zinc finger spans residues 3 to 34; that stretch reads CPFCGKENTRVIDSRPADDCSSIRRRRQCDEC. The region spanning 49–139 is the ATP-cone domain; sequence LVVIKKDNNR…VYREFKDVNT (91 aa).

It belongs to the NrdR family. Requires Zn(2+) as cofactor.

Functionally, negatively regulates transcription of bacterial ribonucleotide reductase nrd genes and operons by binding to NrdR-boxes. The sequence is that of Transcriptional repressor NrdR from Lachnoclostridium phytofermentans (strain ATCC 700394 / DSM 18823 / ISDg) (Clostridium phytofermentans).